The chain runs to 416 residues: Calreticulin (416 aa).

Asparagine 54 carries an N-linked (GlcNAc...) asparagine glycan. An intrachain disulfide couples cysteine 108 to cysteine 140. 4 residues coordinate an alpha-D-glucoside: tyrosine 112, lysine 114, tyrosine 131, and aspartate 138. A run of 7 repeats spans residues 194 to 205 (KQSGSVYTDWDI), 213 to 224 (DPEAKKPEDWED), 230 to 241 (DPEDKKPEGYDD), 248 to 259 (DPEAKKPEDWDD), 263 to 273 (GEWTAPTIPNP), 277 to 287 (GEWKPKKIKNP), and 291 to 301 (GKWKAPMIDNP). The segment at 194–259 (KQSGSVYTDW…EAKKPEDWDD (66 aa)) is 4 X approximate repeats. Residues 209-281 (KQIKDPEAKK…NPDYKGEWKP (73 aa)) form a disordered region. Residues 210 to 255 (QIKDPEAKKPEDWEDKEYIPDPEDKKPEGYDDIPKEITDPEAKKPE) show a composition bias toward basic and acidic residues. Residues 263–301 (GEWTAPTIPNPDYKGEWKPKKIKNPNFKGKWKAPMIDNP) are 3 X approximate repeats. Glutamate 321 provides a ligand contact to an alpha-D-glucoside. The segment covering 349–378 (ETWGKNKDAEKAAFDEAEKKKEEEEAKDDP) has biased composition (basic and acidic residues). Residues 349–416 (ETWGKNKDAE…EDDEDVHDEL (68 aa)) form a disordered region. Residues 379–416 (TESDDEKPDEEGESDGEGDDESKDIDNEEDDEDVHDEL) are compositionally biased toward acidic residues. Residues 413–416 (HDEL) carry the Prevents secretion from ER motif.

Belongs to the calreticulin family.

Its subcellular location is the endoplasmic reticulum lumen. Its function is as follows. Molecular calcium-binding chaperone promoting folding, oligomeric assembly and quality control in the ER via the calreticulin/calnexin cycle. This lectin may interact transiently with almost all of the monoglucosylated glycoproteins that are synthesized in the ER. The chain is Calreticulin from Berberis stolonifera (Barberry).